The following is a 132-amino-acid chain: Intraflagellar transport protein 20 homolog (132 aa).

Positions 70 to 132 (MKAIGARNLL…EFIDQFIFQK (63 aa)) are IFT57-binding. Positions 74–116 (GARNLLKSIAKQREAQQQQLQALIAEKKTQLERYRVEYEALCK) form a coiled coil.

In terms of assembly, component of the IFT complex B, at least composed of IFT20, IFT22, IFT25, IFT27, IFT46, IFT52, TRAF3IP1/IFT54, IFT57, IFT74, IFT80, IFT81, and IFT88. Interacts directly with IFT57 and KIF3B/Kinesin II subunit. Interacts with IFT88. Interacts with CEP83. Interacts with SPEF2 (via C-terminus). Interacts with CBL and CBLB. Interacts with TRIP11. Interacts with TTC21A. Interacts with SPATA1. Interacts with USH1G. Interacts with CCDC146. Interacts with CEP78; regulating IFT20 stability and localization. Expressed predominantly in the testis (at protein level). Expressed in kidney and retina. Expression is up-regulated during spermiogenesis.

It localises to the golgi apparatus. The protein localises to the cis-Golgi network. The protein resides in the cytoplasm. It is found in the cytoskeleton. Its subcellular location is the microtubule organizing center. It localises to the centrosome. The protein localises to the centriole. The protein resides in the cilium basal body. It is found in the cell projection. Its subcellular location is the cilium. It localises to the cytoplasmic vesicle. The protein localises to the secretory vesicle. The protein resides in the acrosome. Part of intraflagellar transport (IFT) particles involved in ciliary process assembly. May play a role in the trafficking of ciliary membrane proteins from the Golgi complex to the cilium. Regulates the ciliary platelet-derived growth factor receptor-alpha (PDGFRA) signaling pathway. Required for protein stability of E3 ubiquitin ligases CBL and CBLB that mediate ubiquitination and internalization of PDGFRA for proper feedback inhibition of PDGFRA signaling. Essential for male fertility. Plays an important role in spermatogenesis, particularly spermiogenesis, when germ cells form flagella. May play a role in the transport of flagellar proteins ODF2 and SPAG16 to build sperm flagella and in the removal of redundant sperm cytoplasm. Also involved in autophagy since it is required for trafficking of ATG16L and the expansion of the autophagic compartment. This is Intraflagellar transport protein 20 homolog (Ift20) from Mus musculus (Mouse).